A 308-amino-acid polypeptide reads, in one-letter code: Mycothiol acetyltransferase (308 aa).

N-acetyltransferase domains follow at residues 8-155 (RDVD…PRLR) and 160-308 (VQVR…RRAR). Residue Glu-39 participates in 1D-myo-inositol 2-(L-cysteinylamino)-2-deoxy-alpha-D-glucopyranoside binding. Residue 84-86 (LVV) participates in acetyl-CoA binding. 1D-myo-inositol 2-(L-cysteinylamino)-2-deoxy-alpha-D-glucopyranoside-binding residues include Glu-187, Lys-226, and Glu-240. Acetyl-CoA-binding positions include 244 to 246 (LGI) and 251 to 257 (QGLGLGR). Tyr-278 serves as a coordination point for 1D-myo-inositol 2-(L-cysteinylamino)-2-deoxy-alpha-D-glucopyranoside.

This sequence belongs to the acetyltransferase family. MshD subfamily. In terms of assembly, monomer.

It carries out the reaction 1D-myo-inositol 2-(L-cysteinylamino)-2-deoxy-alpha-D-glucopyranoside + acetyl-CoA = mycothiol + CoA + H(+). Functionally, catalyzes the transfer of acetyl from acetyl-CoA to desacetylmycothiol (Cys-GlcN-Ins) to form mycothiol. The chain is Mycothiol acetyltransferase from Geodermatophilus obscurus (strain ATCC 25078 / DSM 43160 / JCM 3152 / CCUG 61914 / KCC A-0152 / KCTC 9177 / NBRC 13315 / NRRL B-3577 / G-20).